A 362-amino-acid polypeptide reads, in one-letter code: Fructose-bisphosphate aldolase (362 aa).

Asp33 lines the dihydroxyacetone phosphate pocket. The D-glyceraldehyde 3-phosphate site is built by Ser35 and Thr38. Residue Arg42 coordinates beta-D-fructose 1,6-bisphosphate. Lys106 is a D-glyceraldehyde 3-phosphate binding site. A dihydroxyacetone phosphate-binding site is contributed by Lys145. Glu188 serves as a coordination point for D-glyceraldehyde 3-phosphate. Glu188 (proton acceptor) is an active-site residue. Lys230, Ser272, and Gly273 together coordinate dihydroxyacetone phosphate. The active-site Schiff-base intermediate with dihydroxyacetone phosphate is Lys230. Residues 272 to 274 (SGG) and Ser300 each bind beta-D-fructose 1,6-bisphosphate. Gly302 and Arg303 together coordinate dihydroxyacetone phosphate. Arg303 contacts beta-D-fructose 1,6-bisphosphate.

Belongs to the class I fructose-bisphosphate aldolase family. In terms of assembly, homotetramer. Interacts with TRAP (via cytoplasmic domain); the interaction prevents substrate binding and thereby inhibits aldolase activity. Interacts with MTRAP (via cytoplasmic domain); MTRAP phosphorylation may increase the binding to FBPA. Interact with RH1 (via cytoplasmic domain). Interacts with RH2b (via cytoplasmic domain). Interacts with RH4 (via cytoplasmic domain). Interacts with AMA1 (via cytoplasmic domain); the interaction is weak, however it may be increased upon AMA1 phosphorylation. Interacts with EBA140 (via cytoplasmic domain); the interaction is weak. Interacts with EBA175 (via cytoplasmic domain); the interaction is weak. Interacts with EBA181 (via cytoplasmic domain); the interaction is weak. Interacts with G-actin and F-actin. May interact with ACT2/actin II; the interaction inhibits FBPA catalytic activity. Interacts with human SLC4A1/band 3 (via N-terminus); the interaction inhibits FBPA catalytic activity.

Its subcellular location is the cytoplasm. It is found in the membrane. The protein localises to the host cell membrane. The enzyme catalyses beta-D-fructose 1,6-bisphosphate = D-glyceraldehyde 3-phosphate + dihydroxyacetone phosphate. It participates in carbohydrate degradation; glycolysis; D-glyceraldehyde 3-phosphate and glycerone phosphate from D-glucose: step 4/4. The cytoplasmic tail of TRAP and probably other adhesins acts as a competitive inhibitor as the binding sites of the glycolytic substrate fructose 1,6-bisphosphate and TRAP partially overlap. Inhibited by suramin, an antiparasitic drug used to treat Trypanosome-mediated infection. In terms of biological role, plays a key role in glycolysis by catalyzing the cleavage of fructose 1,6-bisphosphate into dihydroxyacetone phosphate and glyceraldehyde 3-phosphate. Independently of its catalytic activity, connects the actin filaments, and thus the actomyosin motor, to cell surface adhesins of the thrombospondin-related anonymous protein (TRAP), the erythrocyte binding ligand (EBL) and reticulocyte binding homolog (RH) protein families; this interaction is probably involved in transducing the motor force across the parasite surface required for sporozoite and ookinete gliding motility and merozoite invasion. Stimulates actin polymerisation. This chain is Fructose-bisphosphate aldolase, found in Plasmodium falciparum (isolate K1 / Thailand).